The following is a 917-amino-acid chain: Gamma-tubulin complex component 3 (917 aa).

Belongs to the TUBGCP family. In terms of assembly, gamma-tubulin small complex (Gamma TuSC) is a heterotetrameric complex which contains two molecules of gamma-tubulin, and one molecule each of Dgrip84 and Dgrip91. The gamma-tubulin in this complex binds preferentially to GDP over GTP.

Its subcellular location is the cytoplasm. It is found in the cytoskeleton. It localises to the microtubule organizing center. The protein resides in the centrosome. The protein localises to the perinuclear region. The chain is Gamma-tubulin complex component 3 from Drosophila melanogaster (Fruit fly).